The primary structure comprises 256 residues: Thiazole synthase (256 aa).

Catalysis depends on Lys-95, which acts as the Schiff-base intermediate with DXP. 1-deoxy-D-xylulose 5-phosphate contacts are provided by residues Gly-156, 182-183, and 204-205; these read AG and NT.

The protein belongs to the ThiG family. As to quaternary structure, homotetramer. Forms heterodimers with either ThiH or ThiS.

The protein resides in the cytoplasm. The enzyme catalyses [ThiS sulfur-carrier protein]-C-terminal-Gly-aminoethanethioate + 2-iminoacetate + 1-deoxy-D-xylulose 5-phosphate = [ThiS sulfur-carrier protein]-C-terminal Gly-Gly + 2-[(2R,5Z)-2-carboxy-4-methylthiazol-5(2H)-ylidene]ethyl phosphate + 2 H2O + H(+). It participates in cofactor biosynthesis; thiamine diphosphate biosynthesis. Catalyzes the rearrangement of 1-deoxy-D-xylulose 5-phosphate (DXP) to produce the thiazole phosphate moiety of thiamine. Sulfur is provided by the thiocarboxylate moiety of the carrier protein ThiS. In vitro, sulfur can be provided by H(2)S. The sequence is that of Thiazole synthase from Citrobacter koseri (strain ATCC BAA-895 / CDC 4225-83 / SGSC4696).